We begin with the raw amino-acid sequence, 130 residues long: Small ribosomal subunit protein uS9 (130 aa).

Belongs to the universal ribosomal protein uS9 family.

The sequence is that of Small ribosomal subunit protein uS9 from Magnetococcus marinus (strain ATCC BAA-1437 / JCM 17883 / MC-1).